Consider the following 305-residue polypeptide: Deoxyhypusine hydroxylase (305 aa).

HEAT-like PBS-type repeat units lie at residues 54–80 (LKHE…VLKD) and 87–113 (VRHE…YAED). Residues histidine 56, histidine 89, and glutamate 90 each contribute to the Fe cation site. Residues 137 to 160 (EQTKDGTDENPYCSVDPAPPAQRK) form a disordered region. HEAT-like PBS-type repeat units follow at residues 178–204 (DRYR…GLQC), 209–235 (FRHE…ALEK), and 242–268 (VRHE…YRKD). Fe cation is bound by residues histidine 211, histidine 244, and glutamate 245.

Belongs to the deoxyhypusine hydroxylase family. Fe(2+) is required as a cofactor.

The catalysed reaction is [eIF5A protein]-deoxyhypusine + AH2 + O2 = [eIF5A protein]-hypusine + A + H2O. Its pathway is protein modification; eIF5A hypusination. Catalyzes the hydroxylation of the N(6)-(4-aminobutyl)-L-lysine intermediate produced by deoxyhypusine synthase/DHPS on a critical lysine of the eukaryotic translation initiation factor 5A/eIF-5A. This is the second step of the post-translational modification of that lysine into an unusual amino acid residue named hypusine. Hypusination is unique to mature eIF-5A factor and is essential for its function. This chain is Deoxyhypusine hydroxylase (dohh), found in Danio rerio (Zebrafish).